We begin with the raw amino-acid sequence, 405 residues long: Tyrosine--tRNA ligase (405 aa).

The 'HIGH' region motif lies at 48-57 (PSRPDLHLGH). The short motif at 232 to 236 (KMSKS) is the 'KMSKS' region element. Residue Lys-235 participates in ATP binding. The S4 RNA-binding domain occupies 339 to 400 (LPLVDLLTTL…AGKRKFFRIA (62 aa)).

Belongs to the class-I aminoacyl-tRNA synthetase family. TyrS type 2 subfamily. Homodimer.

Its subcellular location is the cytoplasm. The catalysed reaction is tRNA(Tyr) + L-tyrosine + ATP = L-tyrosyl-tRNA(Tyr) + AMP + diphosphate + H(+). Functionally, catalyzes the attachment of tyrosine to tRNA(Tyr) in a two-step reaction: tyrosine is first activated by ATP to form Tyr-AMP and then transferred to the acceptor end of tRNA(Tyr). This Chlorobium luteolum (strain DSM 273 / BCRC 81028 / 2530) (Pelodictyon luteolum) protein is Tyrosine--tRNA ligase.